The chain runs to 639 residues: Ubiquitin-like modifier-activating enzyme ATG7 (639 aa).

Positions 322-327 (GAGTLG) match the GXGXXG motif motif. The active-site Glycyl thioester intermediate is the C502.

This sequence belongs to the ATG7 family. In terms of assembly, homodimer.

The protein resides in the cytoplasm. It localises to the preautophagosomal structure. E1-like activating enzyme involved in the 2 ubiquitin-like systems required for cytoplasm to vacuole transport (Cvt) and autophagy. Activates ATG12 for its conjugation with ATG5 and ATG8 for its conjugation with phosphatidylethanolamine. Both systems are needed for the ATG8 association to Cvt vesicles and autophagosomes membranes. Autophagy is essential for maintenance of amino acid levels and protein synthesis under nitrogen starvation. Required for selective autophagic degradation of the nucleus (nucleophagy) as well as for mitophagy which contributes to regulate mitochondrial quantity and quality by eliminating the mitochondria to a basal level to fulfill cellular energy requirements and preventing excess ROS production. Plays a role in the regulation of filamentous growth and chronological longevity. This Candida albicans (strain SC5314 / ATCC MYA-2876) (Yeast) protein is Ubiquitin-like modifier-activating enzyme ATG7 (APG7).